The sequence spans 393 residues: NAD(P)H-quinone oxidoreductase subunit H, chloroplastic (393 aa).

It belongs to the complex I 49 kDa subunit family. In terms of assembly, NDH is composed of at least 16 different subunits, 5 of which are encoded in the nucleus.

The protein localises to the plastid. It localises to the chloroplast thylakoid membrane. The catalysed reaction is a plastoquinone + NADH + (n+1) H(+)(in) = a plastoquinol + NAD(+) + n H(+)(out). It carries out the reaction a plastoquinone + NADPH + (n+1) H(+)(in) = a plastoquinol + NADP(+) + n H(+)(out). In terms of biological role, NDH shuttles electrons from NAD(P)H:plastoquinone, via FMN and iron-sulfur (Fe-S) centers, to quinones in the photosynthetic chain and possibly in a chloroplast respiratory chain. The immediate electron acceptor for the enzyme in this species is believed to be plastoquinone. Couples the redox reaction to proton translocation, and thus conserves the redox energy in a proton gradient. The polypeptide is NAD(P)H-quinone oxidoreductase subunit H, chloroplastic (Trifolium subterraneum (Subterranean clover)).